The sequence spans 101 residues: Small nuclear ribonucleoprotein Sm D3 (101 aa).

Residues 6-78 (IPVKLLNEAQ…IKFIVVPDLL (73 aa)) form the Sm domain.

The protein belongs to the snRNP core protein family. Component of the Sm core complex, present in spliceosomal snRNP U1, U2, U4/U6 and U5. The core complex contains SMB1, SMD1, SMD2, SMD3, SME1, SMX3 and SMX2 (Sm proteins B, D1, D2, D3, E, F and G, respectively), and is probably a heptameric ring structure. SMD3 specifically interacts with SMB1. Belongs to the CWC complex (or CEF1-associated complex), a spliceosome sub-complex reminiscent of a late-stage spliceosome composed of the U2, U5 and U6 snRNAs and at least BUD13, BUD31, BRR2, CDC40, CEF1, CLF1, CUS1, CWC2, CWC15, CWC21, CWC22, CWC23, CWC24, CWC25, CWC27, ECM2, HSH155, IST3, ISY1, LEA1, MSL1, NTC20, PRP8, PRP9, PRP11, PRP19, PRP21, PRP22, PRP45, PRP46, SLU7, SMB1, SMD1, SMD2, SMD3, SMX2, SMX3, SNT309, SNU114, SPP2, SYF1, SYF2, RSE1 and YJU2. Component of the U4/U6-U5 tri-snRNP complex composed of the U4, U6 and U5 snRNAs and at least PRP3, PRP4, PRP6, PRP8, PRP18, PRP31, PRP38, SNU13, SNU23, SNU66, SNU114, SPP381, SMB1, SMD1, SMD2, SMD3, SMX2, SMX3, LSM2, LSM3, LSM4, LSM5, LSM6, LSM7, LSM8, BRR2 and DIB1.

The protein localises to the cytoplasm. It localises to the cytosol. Its subcellular location is the nucleus. Plays a role in pre-mRNA splicing as a core component of the spliceosomal U1, U2, U4 and U5 small nuclear ribonucleoproteins (snRNPs), the building blocks of the spliceosome. Also binds telomerase RNA and is required for its accumulation. The chain is Small nuclear ribonucleoprotein Sm D3 (SMD3) from Saccharomyces cerevisiae (strain ATCC 204508 / S288c) (Baker's yeast).